We begin with the raw amino-acid sequence, 367 residues long: MQFNPTLDSIKTYEAGKPIELVVREYGIKPQNVIKLASNENPFGASPKVIEAIAKEAVNAHRYPDDSMFELKEGLAGRFGVKSENVIIGSGSDQILEMAVHAKCNASSKVLMSKTTFAMYDVYSRQVGARILRTPSDQHHLGEFWEIYQKERPEILFLCLPNNPLGECLDREEVYDFLQKIDDETLVIVDGAYQEYAAFKDSQKRIDPKDLIERFPSSIFLGTFSKAFGLGGMRVGYGIAQPSIIQALMKMRAPFNITTLSLKAAIEALKESAYVEETIKENFKEMRRYEEFALAQGIDFIPSYTNFITLLLKNRVDSSEFSQWLLERGLIVRNLKSYGINAIRITIGRSLENDRCFELMQEYLHQF.

Residue Lys226 is modified to N6-(pyridoxal phosphate)lysine.

This sequence belongs to the class-II pyridoxal-phosphate-dependent aminotransferase family. Histidinol-phosphate aminotransferase subfamily. In terms of assembly, homodimer. Pyridoxal 5'-phosphate serves as cofactor.

It catalyses the reaction L-histidinol phosphate + 2-oxoglutarate = 3-(imidazol-4-yl)-2-oxopropyl phosphate + L-glutamate. Its pathway is amino-acid biosynthesis; L-histidine biosynthesis; L-histidine from 5-phospho-alpha-D-ribose 1-diphosphate: step 7/9. This Wolinella succinogenes (strain ATCC 29543 / DSM 1740 / CCUG 13145 / JCM 31913 / LMG 7466 / NCTC 11488 / FDC 602W) (Vibrio succinogenes) protein is Histidinol-phosphate aminotransferase.